A 487-amino-acid chain; its full sequence is N-succinylglutamate 5-semialdehyde dehydrogenase (487 aa).

221–226 serves as a coordination point for NAD(+); that stretch reads GSSDTG. Active-site residues include E244 and C278.

This sequence belongs to the aldehyde dehydrogenase family. AstD subfamily.

The enzyme catalyses N-succinyl-L-glutamate 5-semialdehyde + NAD(+) + H2O = N-succinyl-L-glutamate + NADH + 2 H(+). The protein operates within amino-acid degradation; L-arginine degradation via AST pathway; L-glutamate and succinate from L-arginine: step 4/5. Its function is as follows. Catalyzes the NAD-dependent reduction of succinylglutamate semialdehyde into succinylglutamate. The sequence is that of N-succinylglutamate 5-semialdehyde dehydrogenase from Burkholderia multivorans (strain ATCC 17616 / 249).